A 144-amino-acid polypeptide reads, in one-letter code: Mercuric transport protein MerC (144 aa).

Over 1–21 (MSAITRIIDKIGIVGTIVGSF) the chain is Cytoplasmic. A helical transmembrane segment spans residues 22-42 (SCAMCFPAAASLGAAIGLGFL). Positions 23 and 26 each coordinate Hg(2+). Over 43–46 (SQWE) the chain is Periplasmic. The helical transmembrane segment at 47–67 (GLFVQWLIPIFASVALLATLA) threads the bilayer. Topologically, residues 68–78 (GWFSHRQWQRT) are cytoplasmic. The chain crosses the membrane as a helical span at residues 79–99 (LLGSIGPVLALVGVFGLTHHF). The Periplasmic segment spans residues 100–103 (LDKD). Residues 104–124 (LARVIFYTGLVVMFLVSIWDM) traverse the membrane as a helical segment. Topologically, residues 125 to 144 (VNPANRRCATDGCETPAPRS) are cytoplasmic.

In terms of assembly, monomer.

It localises to the cell inner membrane. With respect to regulation, inhibited by the thiol-modifying reagent N-ethylmaleimide (NEM). Its function is as follows. Involved in mercuric ion uptake. The polypeptide is Mercuric transport protein MerC (Acidithiobacillus ferrooxidans (Thiobacillus ferrooxidans)).